A 188-amino-acid chain; its full sequence is MVGGISRTGWLVAAALVALLAAILIFMGRPPICPCGTVSLWHGTVQSNQNSQQISDWYSFSHIIHGFIFYGVLRWIMPERALWVPLAIAIGTEGAWEILENSPLIIDRYREVTMAFGYSGDSVLNSVSDTLFMVAGFLAAGRMRWWVTAALAIAFELFTLWTIRDNLTLNVLMLVSPVEAIKDWQAGG.

3 helical membrane-spanning segments follow: residues Thr8–Gly28, Trp57–Met77, and Met143–Ile163.

This sequence belongs to the UPF0314 family.

The protein resides in the cell membrane. In Sphingopyxis alaskensis (strain DSM 13593 / LMG 18877 / RB2256) (Sphingomonas alaskensis), this protein is UPF0314 protein Sala_3154.